Reading from the N-terminus, the 504-residue chain is Glucose-6-phosphate isomerase (504 aa).

The Proton donor role is filled by glutamate 333. Catalysis depends on residues histidine 364 and lysine 473.

The protein belongs to the GPI family.

It is found in the cytoplasm. It carries out the reaction alpha-D-glucose 6-phosphate = beta-D-fructose 6-phosphate. It participates in carbohydrate biosynthesis; gluconeogenesis. The protein operates within carbohydrate degradation; glycolysis; D-glyceraldehyde 3-phosphate and glycerone phosphate from D-glucose: step 2/4. Catalyzes the reversible isomerization of glucose-6-phosphate to fructose-6-phosphate. The chain is Glucose-6-phosphate isomerase from Xanthomonas oryzae pv. oryzae (strain MAFF 311018).